We begin with the raw amino-acid sequence, 581 residues long: Multicopper oxidase LPR1 (581 aa).

The first 28 residues, 1 to 28 (MESLLCRRRIKRVMVLIIALTWLRSTCG), serve as a signal peptide directing secretion. Residues H148, H150, H196, and H198 each coordinate Cu cation. 4 N-linked (GlcNAc...) asparagine glycosylation sites follow: N254, N298, N386, and N458. The 70-residue stretch at 283 to 352 (PRLNVRRRKY…DVVVDFYKSP (70 aa)) folds into the Plastocyanin-like domain. Positions 464, 467, and 469 each coordinate Cu cation. An N-linked (GlcNAc...) asparagine glycan is attached at N546. Cu cation-binding residues include H562, C563, H564, H568, and M573.

Belongs to the multicopper oxidase family. Cu cation serves as cofactor.

The protein resides in the endoplasmic reticulum membrane. Multicopper oxidase that may be involved in copper homeostasis and oxidative stress response, and that is necessary for root growth inhibition by low phosphate conditions. Functions together with LPR2 and PDR2 in a common pathway that adjusts root meristem activity to phosphate availability. Oxidizes the substrate 2,2'-azinobis-(3-ethylbenzthiazoline-6-sulphonate) in vitro. The chain is Multicopper oxidase LPR1 (LPR1) from Arabidopsis thaliana (Mouse-ear cress).